The chain runs to 520 residues: RNA polymerase sigma factor sigA (520 aa).

The transit peptide at 1-66 (MTATPAVIGL…APATPKLTAV (66 aa)) directs the protein to the chloroplast. Positions 37-49 (GGGGGGGGGGGGD) are enriched in gly residues. Disordered stretches follow at residues 37 to 57 (GGGGGGGGGGGGDAMSFAPPA), 87 to 117 (HHSSAAAALAPPPPPPPPPTPSPASRAAHAH), and 171 to 190 (SVSARQRRMSGRRRGRTKNG). Positions 96–108 (APPPPPPPPPTPS) are enriched in pro residues. Over residues 175–187 (RQRRMSGRRRGRT) the composition is skewed to basic residues. The Polymerase core binding motif lies at 305–318 (DLIQGGLIGLLRGI). A DNA-binding region (H-T-H motif) is located at residues 479 to 498 (WEDISRQFGLSRERVRQVGL).

It belongs to the sigma-70 factor family. In terms of tissue distribution, expressed in shoots. Expressed in the tips of fully elongated leaves. Expressed in leaf blades.

It is found in the plastid. The protein localises to the chloroplast. Functionally, sigma factors are initiation factors that promote the attachment of plastid-encoded RNA polymerase (PEP) to specific initiation sites and are then released. Controls the transcription of the psaA and psaB genes in chloroplast, and thus maintains the abundance of the core protein complex PsaA-PsaB of photosystem I (PSI) in the thylakoid membrane. Maintains PSI activity, sufficient rate of electron transfer from PSII to PSI, and photochemical efficiency. The sequence is that of RNA polymerase sigma factor sigA from Oryza sativa subsp. japonica (Rice).